The primary structure comprises 576 residues: Arginine--tRNA ligase (576 aa).

Residues P123–H133 carry the 'HIGH' region motif.

The protein belongs to the class-I aminoacyl-tRNA synthetase family. As to quaternary structure, monomer.

The protein resides in the cytoplasm. It catalyses the reaction tRNA(Arg) + L-arginine + ATP = L-arginyl-tRNA(Arg) + AMP + diphosphate. The protein is Arginine--tRNA ligase of Wigglesworthia glossinidia brevipalpis.